Reading from the N-terminus, the 101-residue chain is uncharacterized protein (101 aa).

The chain crosses the membrane as a helical span at residues 70–90 (VLFIPIILLLPPSCPLTGVTV).

The protein resides in the membrane. This is an uncharacterized protein from Saccharomyces cerevisiae (strain ATCC 204508 / S288c) (Baker's yeast).